The chain runs to 462 residues: Argininosuccinate lyase (462 aa).

Belongs to the lyase 1 family. Argininosuccinate lyase subfamily.

Its subcellular location is the cytoplasm. The enzyme catalyses 2-(N(omega)-L-arginino)succinate = fumarate + L-arginine. Its pathway is amino-acid biosynthesis; L-arginine biosynthesis; L-arginine from L-ornithine and carbamoyl phosphate: step 3/3. This chain is Argininosuccinate lyase, found in Streptococcus agalactiae serotype Ia (strain ATCC 27591 / A909 / CDC SS700).